Reading from the N-terminus, the 301-residue chain is Hydroxyquinol 1,2-dioxygenase (301 aa).

Positions 169, 202, 226, and 228 each coordinate Fe cation.

This sequence belongs to the intradiol ring-cleavage dioxygenase family. Requires Fe(3+) as cofactor.

The enzyme catalyses benzene-1,2,4-triol + O2 = maleylacetate + 2 H(+). It functions in the pathway aromatic compound metabolism. In terms of biological role, involved in resorcinol degradation. Catalyzes the conversion of hydroxyquinol to malelylacetate. Also shows weak activity with catechol, 3-methylcatechol and 4-methylcatechol, but cannot use 4-chlorocatechol, 4-nitrocatechol or protocatechuate. In Corynebacterium glutamicum (strain ATCC 13032 / DSM 20300 / JCM 1318 / BCRC 11384 / CCUG 27702 / LMG 3730 / NBRC 12168 / NCIMB 10025 / NRRL B-2784 / 534), this protein is Hydroxyquinol 1,2-dioxygenase.